The following is a 224-amino-acid chain: 7-cyano-7-deazaguanine synthase (224 aa).

9-19 (LSGGLDSATAL) contacts ATP. Residues C188, C198, C201, and C204 each contribute to the Zn(2+) site.

It belongs to the QueC family. The cofactor is Zn(2+).

The enzyme catalyses 7-carboxy-7-deazaguanine + NH4(+) + ATP = 7-cyano-7-deazaguanine + ADP + phosphate + H2O + H(+). It functions in the pathway purine metabolism; 7-cyano-7-deazaguanine biosynthesis. Catalyzes the ATP-dependent conversion of 7-carboxy-7-deazaguanine (CDG) to 7-cyano-7-deazaguanine (preQ(0)). The chain is 7-cyano-7-deazaguanine synthase from Thiobacillus denitrificans (strain ATCC 25259 / T1).